The sequence spans 274 residues: 2-dehydro-3-deoxyphosphooctonate aldolase (274 aa).

This sequence belongs to the KdsA family.

Its subcellular location is the cytoplasm. It catalyses the reaction D-arabinose 5-phosphate + phosphoenolpyruvate + H2O = 3-deoxy-alpha-D-manno-2-octulosonate-8-phosphate + phosphate. It functions in the pathway carbohydrate biosynthesis; 3-deoxy-D-manno-octulosonate biosynthesis; 3-deoxy-D-manno-octulosonate from D-ribulose 5-phosphate: step 2/3. It participates in bacterial outer membrane biogenesis; lipopolysaccharide biosynthesis. This chain is 2-dehydro-3-deoxyphosphooctonate aldolase, found in Rickettsia peacockii (strain Rustic).